Reading from the N-terminus, the 442-residue chain is uncharacterized protein (442 aa).

This is an uncharacterized protein from Sputnik virophage.